The chain runs to 283 residues: Acetyl-coenzyme A carboxylase carboxyl transferase subunit beta (283 aa).

The CoA carboxyltransferase N-terminal domain occupies 29 to 283; that stretch reads LWVACPKCQQ…LKLHERGAHY (255 aa). Positions 33, 36, 51, and 54 each coordinate Zn(2+). Residues 33-54 form a C4-type zinc finger; sequence CPKCQQSIYHKDLGYYRTCPVC.

The protein belongs to the AccD/PCCB family. In terms of assembly, acetyl-CoA carboxylase is a heterohexamer composed of biotin carboxyl carrier protein (AccB), biotin carboxylase (AccC) and two subunits each of ACCase subunit alpha (AccA) and ACCase subunit beta (AccD). Zn(2+) serves as cofactor.

The protein resides in the cytoplasm. It catalyses the reaction N(6)-carboxybiotinyl-L-lysyl-[protein] + acetyl-CoA = N(6)-biotinyl-L-lysyl-[protein] + malonyl-CoA. It functions in the pathway lipid metabolism; malonyl-CoA biosynthesis; malonyl-CoA from acetyl-CoA: step 1/1. Component of the acetyl coenzyme A carboxylase (ACC) complex. Biotin carboxylase (BC) catalyzes the carboxylation of biotin on its carrier protein (BCCP) and then the CO(2) group is transferred by the transcarboxylase to acetyl-CoA to form malonyl-CoA. This Latilactobacillus sakei subsp. sakei (strain 23K) (Lactobacillus sakei subsp. sakei) protein is Acetyl-coenzyme A carboxylase carboxyl transferase subunit beta.